The following is a 455-amino-acid chain: tRNA modification GTPase MnmE (455 aa).

(6S)-5-formyl-5,6,7,8-tetrahydrofolate is bound by residues Arg24, Glu81, and Lys120. Residues 216–378 (GMTVVIAGRP…LREHLKACMG (163 aa)) enclose the TrmE-type G domain. Asn226 is a K(+) binding site. Residues 226-231 (NAGKSS), 245-251 (TDIAGTT), 270-273 (DTAG), 335-338 (NKAD), and 359-361 (SAR) each bind GTP. Ser230 contacts Mg(2+). K(+) is bound by residues Thr245, Ile247, and Thr250. Thr251 is a binding site for Mg(2+). Lys455 contacts (6S)-5-formyl-5,6,7,8-tetrahydrofolate.

Belongs to the TRAFAC class TrmE-Era-EngA-EngB-Septin-like GTPase superfamily. TrmE GTPase family. Homodimer. Heterotetramer of two MnmE and two MnmG subunits. K(+) serves as cofactor.

It localises to the cytoplasm. In terms of biological role, exhibits a very high intrinsic GTPase hydrolysis rate. Involved in the addition of a carboxymethylaminomethyl (cmnm) group at the wobble position (U34) of certain tRNAs, forming tRNA-cmnm(5)s(2)U34. The polypeptide is tRNA modification GTPase MnmE (Pseudomonas paraeruginosa (strain DSM 24068 / PA7) (Pseudomonas aeruginosa (strain PA7))).